The following is a 425-amino-acid chain: Histidinol dehydrogenase (425 aa).

3 residues coordinate NAD(+): Y124, Q184, and N207. 3 residues coordinate substrate: S230, Q252, and H255. Zn(2+) contacts are provided by Q252 and H255. Catalysis depends on proton acceptor residues E321 and H322. Substrate-binding residues include H322, D355, E409, and H414. D355 provides a ligand contact to Zn(2+). Residue H414 coordinates Zn(2+).

This sequence belongs to the histidinol dehydrogenase family. Zn(2+) serves as cofactor.

The catalysed reaction is L-histidinol + 2 NAD(+) + H2O = L-histidine + 2 NADH + 3 H(+). Its pathway is amino-acid biosynthesis; L-histidine biosynthesis; L-histidine from 5-phospho-alpha-D-ribose 1-diphosphate: step 9/9. Functionally, catalyzes the sequential NAD-dependent oxidations of L-histidinol to L-histidinaldehyde and then to L-histidine. The sequence is that of Histidinol dehydrogenase from Halobacterium salinarum (strain ATCC 700922 / JCM 11081 / NRC-1) (Halobacterium halobium).